A 228-amino-acid polypeptide reads, in one-letter code: uncharacterized protein (228 aa).

S-adenosyl-L-methionine is bound by residues Gly179, Ile199, and Leu208.

The protein belongs to the class IV-like SAM-binding methyltransferase superfamily. RNA methyltransferase TrmH family.

This is an uncharacterized protein from Borreliella burgdorferi (strain ATCC 35210 / DSM 4680 / CIP 102532 / B31) (Borrelia burgdorferi).